The primary structure comprises 190 residues: ADP-ribosylation factor-like protein 6 (190 aa).

Gly-2 carries N-myristoyl glycine lipidation. GTP-binding positions include 24–31 (GLDNSGKT), Thr-50, 69–73 (DMAGQ), Gly-72, 130–133 (NKMD), and Ala-164. Mg(2+)-binding residues include Thr-31 and Thr-50.

The protein belongs to the small GTPase superfamily. Arf family.

It localises to the cytoplasm. The sequence is that of ADP-ribosylation factor-like protein 6 from Caenorhabditis briggsae.